A 758-amino-acid polypeptide reads, in one-letter code: 1-phosphatidylinositol 4,5-bisphosphate phosphodiesterase delta-4 (758 aa).

The 109-residue stretch at Gln16 to Glu124 folds into the PH domain. The segment at Lys26–Lys53 is substrate binding. 3 EF-hand domains span residues Leu134–Asp169, Met170–Arg205, and Asp206–Glu237. Ca(2+) contacts are provided by Asp147, Asn149, Asp151, Arg153, Glu158, Asp183, Ser185, Ser187, Thr189, and Glu194. Residues Gln213–Glu243 carry the GBA motif. A PI-PLC X-box domain is found at Gln290 to Lys435. Residue His305 is part of the active site. The Ca(2+) site is built by Asn306, Glu335, and Asp337. Residue His350 is part of the active site. A Ca(2+)-binding site is contributed by Glu384. 2 residues coordinate substrate: Lys433 and Lys435. The span at Glu446 to Arg468 shows a compositional bias: acidic residues. A disordered region spans residues Glu446–Lys479. One can recognise a PI-PLC Y-box domain in the interval Leu486–Arg602. Residues Ser515 and Arg542 each contribute to the substrate site. Positions Arg602–Ser731 constitute a C2 domain. The Ca(2+) site is built by Ile645, Asp647, Asn671, Asp700, Tyr701, and Asp702. Residues His726–Leu729 carry the PDZ-binding motif.

Ca(2+) serves as cofactor.

The protein localises to the membrane. It localises to the nucleus. It is found in the cytoplasm. The protein resides in the endoplasmic reticulum. It carries out the reaction a 1,2-diacyl-sn-glycero-3-phospho-(1D-myo-inositol-4,5-bisphosphate) + H2O = 1D-myo-inositol 1,4,5-trisphosphate + a 1,2-diacyl-sn-glycerol + H(+). It catalyses the reaction a 1,2-diacyl-sn-glycero-3-phospho-(1D-myo-inositol) + H2O = 1D-myo-inositol 1-phosphate + a 1,2-diacyl-sn-glycerol + H(+). In terms of biological role, hydrolyzes the phosphatidylinositol 4,5-bisphosphate (PIP2) to generate 2 second messenger molecules diacylglycerol (DAG) and inositol 1,4,5-trisphosphate (IP3). DAG mediates the activation of protein kinase C (PKC), while IP3 releases Ca(2+) from intracellular stores. The chain is 1-phosphatidylinositol 4,5-bisphosphate phosphodiesterase delta-4 (plcd4) from Xenopus laevis (African clawed frog).